The sequence spans 128 residues: L-ectoine synthase (128 aa).

It belongs to the ectoine synthase family.

The catalysed reaction is (2S)-4-acetamido-2-aminobutanoate = L-ectoine + H2O. The protein operates within amine and polyamine biosynthesis; ectoine biosynthesis; L-ectoine from L-aspartate 4-semialdehyde: step 3/3. Catalyzes the circularization of gamma-N-acetyl-alpha,gamma-diaminobutyric acid (ADABA) to ectoine (1,4,5,6-tetrahydro-2-methyl-4-pyrimidine carboxylic acid), which is an excellent osmoprotectant. The protein is L-ectoine synthase of Oceanobacillus iheyensis (strain DSM 14371 / CIP 107618 / JCM 11309 / KCTC 3954 / HTE831).